A 424-amino-acid chain; its full sequence is Serine--tRNA ligase (424 aa).

231–233 (TAE) provides a ligand contact to L-serine. Residue 262 to 264 (RSE) participates in ATP binding. Residue Glu-285 coordinates L-serine. ATP is bound at residue 349–352 (EISS). Ser-385 contacts L-serine.

Belongs to the class-II aminoacyl-tRNA synthetase family. Type-1 seryl-tRNA synthetase subfamily. As to quaternary structure, homodimer. The tRNA molecule binds across the dimer.

It is found in the cytoplasm. It carries out the reaction tRNA(Ser) + L-serine + ATP = L-seryl-tRNA(Ser) + AMP + diphosphate + H(+). The enzyme catalyses tRNA(Sec) + L-serine + ATP = L-seryl-tRNA(Sec) + AMP + diphosphate + H(+). Its pathway is aminoacyl-tRNA biosynthesis; selenocysteinyl-tRNA(Sec) biosynthesis; L-seryl-tRNA(Sec) from L-serine and tRNA(Sec): step 1/1. Its function is as follows. Catalyzes the attachment of serine to tRNA(Ser). Is also able to aminoacylate tRNA(Sec) with serine, to form the misacylated tRNA L-seryl-tRNA(Sec), which will be further converted into selenocysteinyl-tRNA(Sec). This Marinobacter nauticus (strain ATCC 700491 / DSM 11845 / VT8) (Marinobacter aquaeolei) protein is Serine--tRNA ligase.